Reading from the N-terminus, the 75-residue chain is Putative sulfur carrier protein TsuB (75 aa).

Cys-13 acts as the Cysteine persulfide intermediate in catalysis.

Belongs to the sulfur carrier protein TusA family.

Its function is as follows. Involved in thiosulfate metabolism. The protein is Putative sulfur carrier protein TsuB of Escherichia coli (strain K12).